A 609-amino-acid chain; its full sequence is Hemagglutinin glycoprotein (609 aa).

Residues 1-34 are Intravirion-facing; sequence MSSPRDRVNAFYKDNLQFKNTRVVLNKEQLLIER. Residues 35 to 58 traverse the membrane as a helical; Signal-anchor for type II membrane protein segment; that stretch reads PYMLLAVLFVMFLSLVGLLAIAGI. Over 59-609 the chain is Virion surface; the sequence is RLHRAAVNTA…VGIEITCNSR (551 aa). 4 N-linked (GlcNAc...) asparagine; by host glycosylation sites follow: asparagine 168, asparagine 200, asparagine 215, and asparagine 395.

This sequence belongs to the paramyxoviruses hemagglutinin-neuraminidase family. Non-sialidase subfamily.

Its subcellular location is the virion membrane. The protein resides in the host membrane. In terms of biological role, attaches the virus to cell receptors and thereby initiating infection. Binding of H protein to the receptor induces a conformational change that allows the F protein to trigger virion/cell membranes fusion. Down-regulates human MCP/CD46 cell surface expression. In Rinderpest virus (strain L) (RDV), this protein is Hemagglutinin glycoprotein (H).